The chain runs to 862 residues: MNNTTSDINDQRYEPREVEAYWQKEWASDDLYRTNTEVNKENTFYALSMFPYPSGSLHMGHVRNYVITDVLARYKRMKGFNVLHPMGWDSFGLPAENAAIEREISPSTWTDKNISQMKDQLDRLGLSIDWSKEVTTCKEEYYKWTQYIFNQLHKNNLAYQKKATVNWDPIDQTVLANEQVDAEGKSWRSGAKVEKKELNQWFLRITSFAEDLNKDLIKLNDWPDRVRVMQKNWIGKSIGAEITFEIKNSDQKITAFTTRIDTVYGVSYLVLASNHPLIDQLISSNDIDKLNDFRQTQEKLSDLERNSDTRQKLGMYLGVDAINPANNKEIPIWIGDYVIMEYGTGAVMGVPAHDSRDYQFAKSYDLPIQYVIKPNIDEDESYLNAEFVDKGIMINSDKFNGIESDIAKTQILEFGSNSNWAKPKITYKLRDWLISRQRYWGCPIPIINCKKCGQVRVPDNDLPVVLPIDIKLTGKGKSPLTTKTEWINTCCPKCGTEAKRETDTMDTFMCSSWYFLRYINPDNCEKPFLKSEIDKWLPVKQYVGGIEHAILHLLYSRFLTKALKKCGLINIDEPFKKLLTQGMVQAVTFKNPNTNKYFSKDQIKDIDNPKDPLTGENIEIIYEKMSKSKYNGVDPSVVIDKYGADTARMFILFKAPPEKDLEWDDSDVEGQYRFIQRLWKFVINTFKLTNNNSRSNIEKEKSKDEEALRLINIAIKEITDDLDNLQFNTAISELMKVVNGLSLIVNYCSNETLNKVISILVKITSPFSPHIAEELWKTIGNTQSIHLQSWPEFDAGAIEQDTFKLMIQINGKVRGSINASKNLSKENLEDLAIKTEAAIKWMDGKEPKRIIVVPNKLVNIVI.

Positions 51 to 61 match the 'HIGH' region motif; the sequence is PYPSGSLHMGH. Residues 624-628 carry the 'KMSKS' region motif; it reads KMSKS. Lysine 627 contributes to the ATP binding site.

The protein belongs to the class-I aminoacyl-tRNA synthetase family.

It localises to the cytoplasm. The enzyme catalyses tRNA(Leu) + L-leucine + ATP = L-leucyl-tRNA(Leu) + AMP + diphosphate. This Prochlorococcus marinus (strain NATL2A) protein is Leucine--tRNA ligase.